The sequence spans 493 residues: Cell division protein FtsA (493 aa).

The disordered stretch occupies residues 434–468 (AHQSNPTPHIHSSPTERNLSDLKTPSAPLNTAKND). Over residues 436 to 465 (QSNPTPHIHSSPTERNLSDLKTPSAPLNTA) the composition is skewed to polar residues.

Belongs to the FtsA/MreB family. As to quaternary structure, self-interacts. Interacts with FtsZ.

It is found in the cell inner membrane. Cell division protein that is involved in the assembly of the Z ring. May serve as a membrane anchor for the Z ring. In Helicobacter pylori (strain J99 / ATCC 700824) (Campylobacter pylori J99), this protein is Cell division protein FtsA.